The sequence spans 587 residues: ATP-dependent lipid A-core flippase (587 aa).

5 helical membrane-spanning segments follow: residues 31-51, 68-88, 145-165, 169-189, and 259-279; these read LIASGIALVFNALADSGLIYL, LKIMAFVVVGMIILRGVTNFI, GSLITIVREGAYIISLLAVMF, WELTLVLFVIGPIIAVLITIV, and VQIIASLALVAVLFLATTPLI. Residues 32–315 form the ABC transmembrane type-1 domain; that stretch reads IASGIALVFN…LTNVNSQFQR (284 aa). An ABC transporter domain is found at 347–583; sequence LEFKNVSFAY…NGAYKQLYSM (237 aa). 381 to 388 provides a ligand contact to ATP; sequence GRSGSGKS.

It belongs to the ABC transporter superfamily. Lipid exporter (TC 3.A.1.106) family. As to quaternary structure, homodimer.

The protein localises to the cell inner membrane. The enzyme catalyses ATP + H2O + lipid A-core oligosaccharideSide 1 = ADP + phosphate + lipid A-core oligosaccharideSide 2.. Its function is as follows. Involved in lipopolysaccharide (LPS) biosynthesis. Translocates lipid A-core from the inner to the outer leaflet of the inner membrane. Transmembrane domains (TMD) form a pore in the inner membrane and the ATP-binding domain (NBD) is responsible for energy generation. In Haemophilus influenzae (strain 86-028NP), this protein is ATP-dependent lipid A-core flippase.